A 113-amino-acid chain; its full sequence is Iron-sulfur cluster assembly protein CyaY (113 aa).

This sequence belongs to the frataxin family.

In terms of biological role, involved in iron-sulfur (Fe-S) cluster assembly. May act as a regulator of Fe-S biogenesis. The sequence is that of Iron-sulfur cluster assembly protein CyaY from Ralstonia nicotianae (strain ATCC BAA-1114 / GMI1000) (Ralstonia solanacearum).